Here is a 381-residue protein sequence, read N- to C-terminus: S-adenosylmethionine synthase (381 aa).

His-15 provides a ligand contact to ATP. Mg(2+) is bound at residue Asp-17. Glu-43 lines the K(+) pocket. Glu-56 and Gln-99 together coordinate L-methionine. The interval 99 to 109 is flexible loop; the sequence is QSLDIAQGVDN. ATP-binding positions include 164-166, 230-231, Asp-239, 245-246, and Lys-266; these read DGK, RF, and RK. Asp-239 serves as a coordination point for L-methionine. Lys-270 contributes to the L-methionine binding site.

This sequence belongs to the AdoMet synthase family. In terms of assembly, homotetramer; dimer of dimers. It depends on Mg(2+) as a cofactor. Requires K(+) as cofactor.

Its subcellular location is the cytoplasm. The catalysed reaction is L-methionine + ATP + H2O = S-adenosyl-L-methionine + phosphate + diphosphate. Its pathway is amino-acid biosynthesis; S-adenosyl-L-methionine biosynthesis; S-adenosyl-L-methionine from L-methionine: step 1/1. Functionally, catalyzes the formation of S-adenosylmethionine (AdoMet) from methionine and ATP. The overall synthetic reaction is composed of two sequential steps, AdoMet formation and the subsequent tripolyphosphate hydrolysis which occurs prior to release of AdoMet from the enzyme. The polypeptide is S-adenosylmethionine synthase (Legionella jeonii).